A 249-amino-acid polypeptide reads, in one-letter code: 2-C-methyl-D-erythritol 4-phosphate cytidylyltransferase (249 aa).

It belongs to the IspD/TarI cytidylyltransferase family. IspD subfamily.

The catalysed reaction is 2-C-methyl-D-erythritol 4-phosphate + CTP + H(+) = 4-CDP-2-C-methyl-D-erythritol + diphosphate. The protein operates within isoprenoid biosynthesis; isopentenyl diphosphate biosynthesis via DXP pathway; isopentenyl diphosphate from 1-deoxy-D-xylulose 5-phosphate: step 2/6. Its function is as follows. Catalyzes the formation of 4-diphosphocytidyl-2-C-methyl-D-erythritol from CTP and 2-C-methyl-D-erythritol 4-phosphate (MEP). This is 2-C-methyl-D-erythritol 4-phosphate cytidylyltransferase from Chromohalobacter salexigens (strain ATCC BAA-138 / DSM 3043 / CIP 106854 / NCIMB 13768 / 1H11).